The primary structure comprises 385 residues: Leucine aminopeptidase 1 (385 aa).

A signal peptide spans 1 to 14 (MKFLTLALSATATA). Residues 15–85 (MIIVNPEQQP…YGTLHTTRVV (71 aa)) constitute a propeptide that is removed on maturation. Residues His-185, Asp-204, Glu-243, and Asp-270 each coordinate Zn(2+). A disulfide bond links Cys-319 and Cys-323. His-352 lines the Zn(2+) pocket.

The protein belongs to the peptidase M28 family. M28E subfamily. In terms of assembly, monomer. The cofactor is Zn(2+).

The protein resides in the secreted. In terms of biological role, extracellular aminopeptidase that allows assimilation of proteinaceous substrates. In Penicillium rubens (strain ATCC 28089 / DSM 1075 / NRRL 1951 / Wisconsin 54-1255) (Penicillium chrysogenum), this protein is Leucine aminopeptidase 1 (lap1).